We begin with the raw amino-acid sequence, 294 residues long: NAD kinase (294 aa).

Catalysis depends on D73, which acts as the Proton acceptor. NAD(+)-binding positions include 73–74 (DG), 147–148 (NE), H158, R175, D177, and 188–193 (TAYALS).

This sequence belongs to the NAD kinase family. The cofactor is a divalent metal cation.

It localises to the cytoplasm. The enzyme catalyses NAD(+) + ATP = ADP + NADP(+) + H(+). Involved in the regulation of the intracellular balance of NAD and NADP, and is a key enzyme in the biosynthesis of NADP. Catalyzes specifically the phosphorylation on 2'-hydroxyl of the adenosine moiety of NAD to yield NADP. The polypeptide is NAD kinase (Tolumonas auensis (strain DSM 9187 / NBRC 110442 / TA 4)).